Consider the following 577-residue polypeptide: Arginine--tRNA ligase (577 aa).

Positions 122–132 (PNVAKEMHVGH) match the 'HIGH' region motif.

It belongs to the class-I aminoacyl-tRNA synthetase family. In terms of assembly, monomer.

The protein resides in the cytoplasm. It catalyses the reaction tRNA(Arg) + L-arginine + ATP = L-arginyl-tRNA(Arg) + AMP + diphosphate. This Escherichia coli O1:K1 / APEC protein is Arginine--tRNA ligase.